The chain runs to 336 residues: Dihydroorotate dehydrogenase (quinone) (336 aa).

Residues 62–66 and Thr86 each bind FMN; that span reads AGLDK. Lys66 provides a ligand contact to substrate. 111-115 is a substrate binding site; it reads NRMGF. 2 residues coordinate FMN: Asn139 and Asn172. Asn172 is a binding site for substrate. Ser175 functions as the Nucleophile in the catalytic mechanism. Asn177 is a substrate binding site. Residues Lys217 and Thr245 each coordinate FMN. 246–247 lines the substrate pocket; it reads NT. FMN contacts are provided by residues Gly268, Gly297, and 318–319; that span reads FS.

It belongs to the dihydroorotate dehydrogenase family. Type 2 subfamily. As to quaternary structure, monomer. It depends on FMN as a cofactor.

The protein localises to the cell membrane. It carries out the reaction (S)-dihydroorotate + a quinone = orotate + a quinol. It functions in the pathway pyrimidine metabolism; UMP biosynthesis via de novo pathway; orotate from (S)-dihydroorotate (quinone route): step 1/1. Its function is as follows. Catalyzes the conversion of dihydroorotate to orotate with quinone as electron acceptor. This Photorhabdus laumondii subsp. laumondii (strain DSM 15139 / CIP 105565 / TT01) (Photorhabdus luminescens subsp. laumondii) protein is Dihydroorotate dehydrogenase (quinone).